The following is a 509-amino-acid chain: MLSRALLCLALAWAARVGADALEEEDNVLVLKKSNFAEALAAHNYLLVEFYAPWCGHCKALAPEYAKAAAKLKAEGSEIRLAKVDATEESDLAQQYGVRGYPTIKFFKNGDTASPKEYTAGREADDIVNWLKKRTGPAATTLSDTAAAESLVDSSEVTVIGFFKDAGSDSAKQFLLAAEAVDDIPFGITSNSDVFSKYQLDKDGVVLFKKFDEGRNNFEGEITKEKLLDFIKHNQLPLVIEFTEQTAPKIFGGEIKTHILLFLPKSVSDYDGKLSNFKKAAEGFKGKILFIFIDSDHTDNQRILEFFGLKKEECPAVRLITLEEEMTKYKPESDELTAEKITQFCHHFLEGKIKPHLMSQELPEDWDKQPVKVLVGKNFEEVAFDEKKNVFVEFYAPWCGHCKQLAPIWDKLGETYKDHENIVIAKMDSTANEVEAVKVHSFPTLKFFPASADRTVIDYNGERTLDGFKKFLESGGQDGAGDNDDLDLEEALEPDMEEDDDQKAVKDEL.

The N-terminal stretch at 1 to 19 is a signal peptide; that stretch reads MLSRALLCLALAWAARVGA. In terms of domain architecture, Thioredoxin 1 spans 20-136; sequence DALEEEDNVL…IVNWLKKRTG (117 aa). Residues Cys55 and Cys58 each act as nucleophile in the active site. An intrachain disulfide couples Cys55 to Cys58. Lys202 is modified (N6-acetyllysine). N6-succinyllysine occurs at positions 224 and 273. A phosphoserine mark is found at Ser333 and Ser359. Residues 335–477 enclose the Thioredoxin 2 domain; sequence ELTAEKITQF…FKKFLESGGQ (143 aa). Active-site nucleophile residues include Cys399 and Cys402. A disulfide bridge connects residues Cys399 and Cys402. Ser429 is subject to Phosphoserine. A Prevents secretion from ER motif is present at residues 506–509; that stretch reads KDEL.

It belongs to the protein disulfide isomerase family. Heterodimer; heterodimerizes with the protein microsomal triglyceride transfer MTTP. Homodimer. Monomers and homotetramers may also occur. Interacts with P4HA2, forming a heterotetramer consisting of 2 alpha subunits (P4HA2) and 2 beta (P4HB), where P4HB plays the role of a structural subunit; this tetramer catalyzes the formation of 4-hydroxyproline in collagen. Also constitutes the structural subunit of the microsomal triacylglycerol transfer protein MTTP in mammalian cells. Stabilizes both enzymes and retain them in the ER without contributing to the catalytic activity. Binds UBQLN1. Interacts with ERO1B. Interacts with ILDR2. Interacts with ERN1/IRE1A (via N-terminus); the interaction is enhanced by phosphorylation of P4HB by FAM20C in response to endoplasmic reticulum stress and results in attenuation of ERN1 activity. Post-translationally, phosphorylation of Ser-359 by FAM20C is induced by endoplasmic reticulum stress and results in a functional switch from oxidoreductase to molecular chaperone. It also promotes interaction with ERN1.

The protein localises to the endoplasmic reticulum. Its subcellular location is the endoplasmic reticulum lumen. It localises to the melanosome. It is found in the cell membrane. It carries out the reaction Catalyzes the rearrangement of -S-S- bonds in proteins.. Functionally, this multifunctional protein catalyzes the formation, breakage and rearrangement of disulfide bonds. At the cell surface, seems to act as a reductase that cleaves disulfide bonds of proteins attached to the cell. May therefore cause structural modifications of exofacial proteins. Inside the cell, seems to form/rearrange disulfide bonds of nascent proteins. At high concentrations and following phosphorylation by FAM20C, functions as a chaperone that inhibits aggregation of misfolded proteins. At low concentrations, facilitates aggregation (anti-chaperone activity). May be involved with other chaperones in the structural modification of the TG precursor in hormone biogenesis. Also acts as a structural subunit of various enzymes such as prolyl 4-hydroxylase and microsomal triacylglycerol transfer protein MTTP. Receptor for LGALS9; the interaction retains P4HB at the cell surface of Th2 T helper cells, increasing disulfide reductase activity at the plasma membrane, altering the plasma membrane redox state and enhancing cell migration. The sequence is that of Protein disulfide-isomerase (P4hb) from Rattus norvegicus (Rat).